Reading from the N-terminus, the 440-residue chain is Thymidine phosphorylase (440 aa).

Belongs to the thymidine/pyrimidine-nucleoside phosphorylase family. As to quaternary structure, homodimer.

It carries out the reaction thymidine + phosphate = 2-deoxy-alpha-D-ribose 1-phosphate + thymine. It participates in pyrimidine metabolism; dTMP biosynthesis via salvage pathway; dTMP from thymine: step 1/2. In terms of biological role, the enzymes which catalyze the reversible phosphorolysis of pyrimidine nucleosides are involved in the degradation of these compounds and in their utilization as carbon and energy sources, or in the rescue of pyrimidine bases for nucleotide synthesis. The chain is Thymidine phosphorylase from Serratia proteamaculans (strain 568).